Reading from the N-terminus, the 331-residue chain is Aromatic 2-oxoacid reductase (331 aa).

NAD(+)-binding positions include 154-155, Asp-175, 205-206, Asn-211, 232-234, and Asp-258; these read RI, AP, and AAR. Arg-234 is an active-site residue. Glu-263 is a catalytic residue. The Proton donor role is filled by His-295.

The protein belongs to the D-isomer specific 2-hydroxyacid dehydrogenase family.

The enzyme catalyses (R)-3-phenyllactate + NAD(+) = 3-phenylpyruvate + NADH + H(+). It carries out the reaction (2R)-2-hydroxy-3-(4-hydroxyphenyl)propanoate + NAD(+) = 3-(4-hydroxyphenyl)pyruvate + NADH + H(+). The catalysed reaction is 3-(indol-3-yl)lactate + NAD(+) = indole-3-pyruvate + NADH + H(+). It functions in the pathway amino-acid degradation. Essential for the reductive metabolism of L-phenylalanine, L-tyrosine and L-tryptophan. Catalyzes the conversion of phenylpyruvic acid to phenyllactic acid, 4-hydroxy-phenylpyruvic acid to 4-hydroxy-phenyllactic acid, and indolepyruvic acid to indolelactic acid. The polypeptide is Aromatic 2-oxoacid reductase (Clostridium sporogenes (strain ATCC 15579)).